Consider the following 129-residue polypeptide: Glycine cleavage system H protein (129 aa).

Residues 24-106 (SYTVGITEHA…FGDGWFFRVM (83 aa)) enclose the Lipoyl-binding domain. K65 is modified (N6-lipoyllysine).

Belongs to the GcvH family. In terms of assembly, the glycine cleavage system is composed of four proteins: P, T, L and H. Requires (R)-lipoate as cofactor.

Functionally, the glycine cleavage system catalyzes the degradation of glycine. The H protein shuttles the methylamine group of glycine from the P protein to the T protein. This Shewanella frigidimarina (strain NCIMB 400) protein is Glycine cleavage system H protein.